The chain runs to 468 residues: Lysosomal dipeptide transporter MFSD1 (468 aa).

Residues 1 to 25 (MEDEEEEARALLPGGSDEAGRETRA) form a disordered region. The Dileucine internalization motif signature appears at 11 to 12 (LL). 12 helical membrane passes run 42–62 (LAHRLVVLLLMCFLGFGSYFC), 86–106 (LLYAWYSWPNVVLCFFGGFLI), 116–136 (TIIFSCFVCIGQVVFALGGIF), 138–158 (AFWLMELGRFVFGIGGESLAV), 173–194 (LNLVFGLQLSMARIGSTVNMNL), 218–238 (LMIGGITCILSLVCALALAYL), 270–290 (WLIFIICVCYYVAIFPFIGLV), 307–327 (AINSVVYVISAPMSPIFGLLV), 334–354 (IIWVLCAVVTTLASHIMLAFT), 364–384 (LLGLSYSLLACALWPMVAFVV), 395–415 (FMQSIQNLGLAVISIIAGMIL), and 421–441 (LFLEVFFIACVSLSLLSVVLL).

It belongs to the major facilitator superfamily. As to quaternary structure, homodimer. Interacts with lysosomal protein GLMP (via lumenal domain); the interaction starts while both proteins are still in the endoplasmic reticulum and is required for stabilization of MFSD1 in lysosomes but has no direct effect on its targeting to lysosomes or transporter activity.

It is found in the lysosome membrane. It carries out the reaction L-alpha-aminoacyl-L-arginine(out) = L-alpha-aminoacyl-L-arginine(in). The enzyme catalyses L-arginyl-L-alpha-amino acid(out) = L-arginyl-L-alpha-amino acid(in). It catalyses the reaction L-arginyl-glycine(out) = L-arginyl-glycine(in). The catalysed reaction is L-alpha-aminoacyl-L-lysine(out) = L-alpha-aminoacyl-L-lysine(in). It carries out the reaction L-aspartyl-L-lysine(out) = L-aspartyl-L-lysine(in). The enzyme catalyses L-alanyl-L-lysine(out) = L-alanyl-L-lysine(in). It catalyses the reaction L-lysyl-L-alpha-amino acid(out) = L-lysyl-L-alpha-amino acid(in). The catalysed reaction is L-lysyl-L-alanine(out) = L-lysyl-L-alanine(in). It carries out the reaction L-lysyl-L-lysine(out) = L-lysyl-L-lysine(in). The enzyme catalyses L-lysyl-glycine(out) = L-lysyl-glycine(in). It catalyses the reaction L-alpha-aminoacyl-L-histidine(out) = L-alpha-aminoacyl-L-histidine(in). The catalysed reaction is L-histidyl-L-alpha-amino acid(out) = L-histidyl-L-alpha-amino acid(in). It carries out the reaction L-histidyl-glycine(out) = L-histidyl-glycine(in). Functionally, lysosomal dipeptide uniporter that selectively exports lysine, arginine or histidine-containing dipeptides with a net positive charge from the lysosome lumen into the cytosol. Could play a role in a specific type of protein O-glycosylation indirectly regulating macrophages migration and tissue invasion. Also essential for liver homeostasis. In Bos taurus (Bovine), this protein is Lysosomal dipeptide transporter MFSD1.